A 229-amino-acid polypeptide reads, in one-letter code: Putative N-acetylmannosamine-6-phosphate 2-epimerase (229 aa).

The protein belongs to the NanE family.

The enzyme catalyses an N-acyl-D-glucosamine 6-phosphate = an N-acyl-D-mannosamine 6-phosphate. It participates in amino-sugar metabolism; N-acetylneuraminate degradation; D-fructose 6-phosphate from N-acetylneuraminate: step 3/5. Its function is as follows. Converts N-acetylmannosamine-6-phosphate (ManNAc-6-P) to N-acetylglucosamine-6-phosphate (GlcNAc-6-P). This is Putative N-acetylmannosamine-6-phosphate 2-epimerase from Shigella dysenteriae serotype 1 (strain Sd197).